A 323-amino-acid chain; its full sequence is MFNFANFYQLIAQDTRLQPWLNVLPQQLTDWQNAEHGDFGRWLKALNKIPQGAPNQVDIKNSVTISNDTPFHEGELKKLESLLRTFHPWRKGPYTVHGIHIDTEWRSDWKWDRVLPHISPLKNRSVLDVGCGNGYHMWRMLGEGARLTVGIDPSHLFLIQFEAIRKLMGDDQRAHLLPLGIEQLPKLEAFDTVFSMGVLYHRRSPLDHLVQLKDQLVSGGELVLETLVIEGDENAVLVPTSRYAQMRNVYFFPSAKALKVWLELVGFKDVRIVDENVTTVGEQRTTDWMTHNSLPDYLDPNDPSKTVEGYPAPRRAVLVATKP.

Carboxy-S-adenosyl-L-methionine contacts are provided by residues Lys91, Trp105, Lys110, Gly130, 152-154, 181-182, Met196, Tyr200, and Arg315; these read DPS and IE.

The protein belongs to the class I-like SAM-binding methyltransferase superfamily. CmoB family. Homotetramer.

The catalysed reaction is carboxy-S-adenosyl-L-methionine + 5-hydroxyuridine(34) in tRNA = 5-carboxymethoxyuridine(34) in tRNA + S-adenosyl-L-homocysteine + H(+). Functionally, catalyzes carboxymethyl transfer from carboxy-S-adenosyl-L-methionine (Cx-SAM) to 5-hydroxyuridine (ho5U) to form 5-carboxymethoxyuridine (cmo5U) at position 34 in tRNAs. The sequence is that of tRNA U34 carboxymethyltransferase from Vibrio campbellii (strain ATCC BAA-1116).